A 442-amino-acid polypeptide reads, in one-letter code: MELLSRVLLWKLLLLQSSAVLSSGPSGTAAASSSLVSESVVSLAAGTQAVLRCQSPRMVWTQDRLHDRQRVVHWDLSGGPGSQRRRLVDMYSAGEQRVYEPRDRDRLLLSPSAFHDGNFSLLIRAVDRGDEGVYTCNLHHHYCHLDESLAVRLEVTEDPLLSRAYWDGEKEVLVVAHGAPALMTCINRAHVWTDRHLEEAQQVVHWDRQLPGVSHDRADRLLDLYASGERRAYGPPFLRDRVSVNTNAFARGDFSLRIDELERADEGIYSCHLHHHYCGLHERRVFHLQVTEPAFEPPARASPGNGSGHSSAPSPDPTLTRGHSIINVIVPEDHTHFFQQLGYVLATLLLFILLLITVVLATRYRHSGGCKTSDKKAGKSKGKDVNMVEFAVATRDQAPYRTEDIQLDYKNNILKERAELAHSPLPAKDVDLDKEFRKEYCK.

The signal sequence occupies residues 1-19; it reads MELLSRVLLWKLLLLQSSA. Residues 20-340 lie on the Extracellular side of the membrane; that stretch reads VLSSGPSGTA…PEDHTHFFQQ (321 aa). Ig-like V-type domains are found at residues 25-156 and 159-291; these read PSGT…LEVT and PLLS…LQVT. 2 cysteine pairs are disulfide-bonded: Cys53–Cys136 and Cys185–Cys271. Asn118 carries N-linked (GlcNAc...) asparagine glycosylation. The RGD 1 signature appears at 128–130; the sequence is RGD. Ser227 carries the phosphoserine modification. The RGD 2 motif lies at 251–253; the sequence is RGD. Residues 296 to 319 form a disordered region; the sequence is EPPARASPGNGSGHSSAPSPDPTL. Asn305 carries N-linked (GlcNAc...) asparagine glycosylation. Residues 341–361 form a helical membrane-spanning segment; that stretch reads LGYVLATLLLFILLLITVVLA. Residues 362 to 442 lie on the Cytoplasmic side of the membrane; that stretch reads TRYRHSGGCK…DKEFRKEYCK (81 aa).

As to quaternary structure, homodimer in cis. Does not appear to form trans-homodimers. Interacts with ITGB3; the interaction inhibits ITGAV:ITGB3 heterodimer formation. In terms of tissue distribution, widely expressed (at protein level). Highly expressed in brain where it localizes to the glia limitans, which is formed by the endfeet of astrocytes surrounding capillaries, and beneath the pia mater (at protein level). In lung, detected in epithelial cells of the bronchus (at protein level). Expressed in intercalated disks in the heart (at protein level). Detected in pancreatic alpha-cells in the islet of Langerhans (at protein level). In kidney, found in the brush border of the proximal convoluted tubule (at protein level). Expressed in the epithelium of the small intestine (at protein level). Weakly expressed in liver (at protein level). Detected in myeloid cells.

The protein resides in the cell membrane. It is found in the cell junction. The protein localises to the tight junction. It localises to the cytoplasm. Its subcellular location is the cell projection. The protein resides in the cilium membrane. It is found in the nucleus. In terms of biological role, transmembrane protein which can modulate activity of various signaling pathways, probably via binding to integrin ITGAV:ITGB3. Mediates heterophilic cell-cell interactions in vitro. Inhibits osteoclastogenesis downstream of TNFSF11/RANKL and CSF1, where it may function by attenuating signaling via integrin ITGB3 and MAP kinase p38. Plays a role in cartilage formation where it promotes proliferation and maturation of growth plate chondrocytes. Stimulates formation of primary cilia in chondrocytes. Enhances expression of genes involved in the hedgehog signaling pathway in chondrocytes, including the hedgehog signaling molecule IHH; may also promote signaling via the PTHLH/PTHrP pathway. Plays a role in angiogenesis where it suppresses migration of endothelial cells and also promotes their apoptosis. Inhibits VEGF-induced activation of AKT and p38 MAP kinase in endothelial cells. Also inhibits VTN (vitronectin)-mediated integrin ITGAV:ITGB3 signaling and activation of PTK2/FAK. May play a role in the maturation and maintenance of the blood-brain barrier. This chain is Matrix remodeling-associated protein 8, found in Mus musculus (Mouse).